Here is a 111-residue protein sequence, read N- to C-terminus: UPF0122 protein YofM (111 aa).

This sequence belongs to the UPF0122 family.

In terms of biological role, might take part in the signal recognition particle (SRP) pathway. This is inferred from the conservation of its genetic proximity to ftsY/ffh. May be a regulatory protein. The polypeptide is UPF0122 protein YofM (yofM) (Lactococcus lactis subsp. lactis (strain IL1403) (Streptococcus lactis)).